The following is a 370-amino-acid chain: DNA replication and repair protein RecF (370 aa).

30–37 lines the ATP pocket; sequence GQNGMGKT.

It belongs to the RecF family.

The protein localises to the cytoplasm. Its function is as follows. The RecF protein is involved in DNA metabolism; it is required for DNA replication and normal SOS inducibility. RecF binds preferentially to single-stranded, linear DNA. It also seems to bind ATP. In Bacteroides fragilis (strain ATCC 25285 / DSM 2151 / CCUG 4856 / JCM 11019 / LMG 10263 / NCTC 9343 / Onslow / VPI 2553 / EN-2), this protein is DNA replication and repair protein RecF.